We begin with the raw amino-acid sequence, 432 residues long: D-amino acid dehydrogenase (432 aa).

Residue 3–17 (VVILGSGVVGVTSAW) coordinates FAD.

This sequence belongs to the DadA oxidoreductase family. FAD is required as a cofactor.

The catalysed reaction is a D-alpha-amino acid + A + H2O = a 2-oxocarboxylate + AH2 + NH4(+). Its pathway is amino-acid degradation; D-alanine degradation; NH(3) and pyruvate from D-alanine: step 1/1. Its function is as follows. Oxidative deamination of D-amino acids. The protein is D-amino acid dehydrogenase of Salmonella arizonae (strain ATCC BAA-731 / CDC346-86 / RSK2980).